We begin with the raw amino-acid sequence, 40 residues long: Ferredoxin-2 (40 aa).

In terms of domain architecture, 2Fe-2S ferredoxin-type spans 3–40 (YNIKLITPEGTKEITCSDSEYILDAAEEKGLDLPYSCR). Residue cysteine 39 participates in [2Fe-2S] cluster binding.

Belongs to the 2Fe2S plant-type ferredoxin family. It depends on [2Fe-2S] cluster as a cofactor.

It is found in the plastid. It localises to the chloroplast. Ferredoxins are iron-sulfur proteins that transfer electrons in a wide variety of metabolic reactions. This is Ferredoxin-2 from Pisum sativum (Garden pea).